The following is a 717-amino-acid chain: Ribosomal RNA large subunit methyltransferase K/L (717 aa).

The region spanning 44-155 (DAYKVCIYSY…KQFVNVFLCL (112 aa)) is the THUMP domain.

This sequence belongs to the methyltransferase superfamily. RlmKL family.

The protein resides in the cytoplasm. The catalysed reaction is guanosine(2445) in 23S rRNA + S-adenosyl-L-methionine = N(2)-methylguanosine(2445) in 23S rRNA + S-adenosyl-L-homocysteine + H(+). The enzyme catalyses guanosine(2069) in 23S rRNA + S-adenosyl-L-methionine = N(2)-methylguanosine(2069) in 23S rRNA + S-adenosyl-L-homocysteine + H(+). Functionally, specifically methylates the guanine in position 2445 (m2G2445) and the guanine in position 2069 (m7G2069) of 23S rRNA. The chain is Ribosomal RNA large subunit methyltransferase K/L from Francisella tularensis subsp. tularensis (strain WY96-3418).